The sequence spans 545 residues: Chaperonin GroEL (545 aa).

Residues 30 to 33, Lys51, 87 to 91, Gly415, and Asp495 contribute to the ATP site; these read TLGP and DGTTT.

The protein belongs to the chaperonin (HSP60) family. As to quaternary structure, forms a cylinder of 14 subunits composed of two heptameric rings stacked back-to-back. Interacts with the co-chaperonin GroES.

Its subcellular location is the cytoplasm. It catalyses the reaction ATP + H2O + a folded polypeptide = ADP + phosphate + an unfolded polypeptide.. In terms of biological role, together with its co-chaperonin GroES, plays an essential role in assisting protein folding. The GroEL-GroES system forms a nano-cage that allows encapsulation of the non-native substrate proteins and provides a physical environment optimized to promote and accelerate protein folding. The polypeptide is Chaperonin GroEL (Shewanella baltica (strain OS155 / ATCC BAA-1091)).